A 304-amino-acid chain; its full sequence is Acetyl-coenzyme A carboxylase carboxyl transferase subunit beta (304 aa).

The CoA carboxyltransferase N-terminal domain occupies 52–304; the sequence is EVTKCPSCGV…TIFKVLNDII (253 aa). Positions 56, 59, 75, and 78 each coordinate Zn(2+). The segment at 56–78 adopts a C4-type zinc-finger fold; it reads CPSCGVLSHKSEIRANMKMCSNC.

Belongs to the AccD/PCCB family. As to quaternary structure, acetyl-CoA carboxylase is a heterohexamer composed of biotin carboxyl carrier protein (AccB), biotin carboxylase (AccC) and two subunits each of ACCase subunit alpha (AccA) and ACCase subunit beta (AccD). It depends on Zn(2+) as a cofactor.

The protein localises to the cytoplasm. It catalyses the reaction N(6)-carboxybiotinyl-L-lysyl-[protein] + acetyl-CoA = N(6)-biotinyl-L-lysyl-[protein] + malonyl-CoA. It participates in lipid metabolism; malonyl-CoA biosynthesis; malonyl-CoA from acetyl-CoA: step 1/1. Component of the acetyl coenzyme A carboxylase (ACC) complex. Biotin carboxylase (BC) catalyzes the carboxylation of biotin on its carrier protein (BCCP) and then the CO(2) group is transferred by the transcarboxylase to acetyl-CoA to form malonyl-CoA. The sequence is that of Acetyl-coenzyme A carboxylase carboxyl transferase subunit beta from Fusobacterium nucleatum subsp. nucleatum (strain ATCC 25586 / DSM 15643 / BCRC 10681 / CIP 101130 / JCM 8532 / KCTC 2640 / LMG 13131 / VPI 4355).